We begin with the raw amino-acid sequence, 296 residues long: Diaminopimelate epimerase (296 aa).

Substrate contacts are provided by N11 and N78. C87 functions as the Proton donor in the catalytic mechanism. Residues 88–89 (GN), N167, N203, and 221–222 (ER) contribute to the substrate site. C230 (proton acceptor) is an active-site residue. 231-232 (GT) contributes to the substrate binding site.

Belongs to the diaminopimelate epimerase family. As to quaternary structure, homodimer.

The protein localises to the cytoplasm. The enzyme catalyses (2S,6S)-2,6-diaminopimelate = meso-2,6-diaminopimelate. The protein operates within amino-acid biosynthesis; L-lysine biosynthesis via DAP pathway; DL-2,6-diaminopimelate from LL-2,6-diaminopimelate: step 1/1. Catalyzes the stereoinversion of LL-2,6-diaminopimelate (L,L-DAP) to meso-diaminopimelate (meso-DAP), a precursor of L-lysine and an essential component of the bacterial peptidoglycan. In Mycobacterium leprae (strain Br4923), this protein is Diaminopimelate epimerase.